Consider the following 128-residue polypeptide: Small ribosomal subunit protein uS11 (128 aa).

The protein belongs to the universal ribosomal protein uS11 family. Part of the 30S ribosomal subunit. Interacts with proteins S7 and S18. Binds to IF-3.

Functionally, located on the platform of the 30S subunit, it bridges several disparate RNA helices of the 16S rRNA. Forms part of the Shine-Dalgarno cleft in the 70S ribosome. The sequence is that of Small ribosomal subunit protein uS11 from Porphyromonas gingivalis (strain ATCC BAA-308 / W83).